The chain runs to 239 residues: Acidic leucine-rich nuclear phosphoprotein 32 family member B (239 aa).

4 LRR repeats span residues 16–40 (AADA…LTSE), 43–64 (SLEF…PKLP), 65–87 (KLKK…AERT), and 89–110 (NLTH…EPLK). Residues 123–165 (CEVTMLNNYRESVFELLPKLTFLDGFDADDQEAPDSDPEAEDL) enclose the LRRCT domain. Positions 149–215 (DADDQEAPDS…EEDEDDEDVP (67 aa)) are enriched in acidic residues. The tract at residues 149–239 (DADDQEAPDS…EEEEDDEDDE (91 aa)) is disordered. Positions 216–225 (QGEKRKRDLS) are enriched in basic and acidic residues. The span at 226–239 (DEGEEEEEDDEDDE) shows a compositional bias: acidic residues.

Belongs to the ANP32 family.

It is found in the nucleus. Multifunctional protein working as a cell cycle progression factor as well as a cell survival factor. Required for the progression from the G1 to the S phase. Anti-apoptotic protein which functions as a caspase-3 inhibitor. Has no phosphatase 2A (PP2A) inhibitor activity. Exhibits histone chaperone properties, stimulating core histones to assemble into a nucleosome. The protein is Acidic leucine-rich nuclear phosphoprotein 32 family member B (anp32b) of Xenopus laevis (African clawed frog).